The sequence spans 751 residues: Proton-associated sugar transporter A (751 aa).

6 helical membrane-spanning segments follow: residues 93–113 (ILFG…PVLL), 123–143 (SLVW…LGAW), 155–175 (RPFI…LLNG), 191–211 (WGIL…DSAD), 233–253 (IHAL…GIHW), and 268–288 (VIYV…LISI). At Thr500 the chain carries Phosphothreonine. A run of 6 helical transmembrane segments spans residues 536–556 (GWLS…EVVF), 576–596 (VTMG…YSAI), 606–626 (VRTL…LATL), 630–650 (LYVV…LCTL), 688–708 (FLAQ…VGSA), and 710–730 (GVMY…SLCV).

It belongs to the glycoside-pentoside-hexuronide (GPH) cation symporter transporter (TC 2.A.2) family.

It is found in the membrane. It catalyses the reaction D-galactose(in) + H(+)(in) = D-galactose(out) + H(+)(out). It carries out the reaction D-glucose(out) + H(+)(out) = D-glucose(in) + H(+)(in). In terms of biological role, proton-associated glucose transporter in the brain. In Mus musculus (Mouse), this protein is Proton-associated sugar transporter A.